Here is a 199-residue protein sequence, read N- to C-terminus: Recombination protein RecR (199 aa).

The segment at 57 to 72 adopts a C4-type zinc-finger fold; the sequence is CEICGNLDTKSICHIC. Residues 80–175 form the Toprim domain; it reads STIAIVETVA…KISRLASGIP (96 aa).

The protein belongs to the RecR family.

May play a role in DNA repair. It seems to be involved in an RecBC-independent recombinational process of DNA repair. It may act with RecF and RecO. This is Recombination protein RecR from Rickettsia prowazekii (strain Madrid E).